Consider the following 460-residue polypeptide: ATP synthase subunit beta (460 aa).

150 to 157 is a binding site for ATP; it reads GGAGVGKT.

It belongs to the ATPase alpha/beta chains family. F-type ATPases have 2 components, CF(1) - the catalytic core - and CF(0) - the membrane proton channel. CF(1) has five subunits: alpha(3), beta(3), gamma(1), delta(1), epsilon(1). CF(0) has three main subunits: a(1), b(2) and c(9-12). The alpha and beta chains form an alternating ring which encloses part of the gamma chain. CF(1) is attached to CF(0) by a central stalk formed by the gamma and epsilon chains, while a peripheral stalk is formed by the delta and b chains.

It localises to the cell inner membrane. The enzyme catalyses ATP + H2O + 4 H(+)(in) = ADP + phosphate + 5 H(+)(out). Produces ATP from ADP in the presence of a proton gradient across the membrane. The catalytic sites are hosted primarily by the beta subunits. This chain is ATP synthase subunit beta, found in Enterobacter sp. (strain 638).